A 499-amino-acid polypeptide reads, in one-letter code: Lysine--tRNA ligase (499 aa).

Mg(2+) contacts are provided by glutamate 408 and glutamate 415.

The protein belongs to the class-II aminoacyl-tRNA synthetase family. As to quaternary structure, homodimer. It depends on Mg(2+) as a cofactor.

The protein localises to the cytoplasm. The catalysed reaction is tRNA(Lys) + L-lysine + ATP = L-lysyl-tRNA(Lys) + AMP + diphosphate. The protein is Lysine--tRNA ligase of Bacillus cereus (strain AH820).